Here is a 2488-residue protein sequence, read N- to C-terminus: Neuron navigator 2 (2488 aa).

The region spanning 85-192 (GFDTQIYTDW…LFFSLSRYKQ (108 aa)) is the Calponin-homology (CH) domain. 3 stretches are compositionally biased toward low complexity: residues 194–204 (QQQPQKQHLSS), 221–247 (QAGT…PHQQ), and 255–267 (QSSA…SQSK). Disordered stretches follow at residues 194–675 (QQQP…GSNT) and 706–727 (TEGN…SHFT). Over residues 299–315 (GGSTTANNRRSQSFNNY) the composition is skewed to polar residues. Residues 356–369 (SGSSSTPTNCSTSS) show a composition bias toward low complexity. Positions 384–396 (KSLSVKHSATVSM) are enriched in polar residues. Pro residues predominate over residues 401–410 (PPGPEAPRPT). A compositionally biased stretch (polar residues) spans 492 to 506 (RTFSRALTNKKSSLK). A coiled-coil region spans residues 498-531 (LTNKKSSLKGNEKEKEKQQREKDKEKSKDLAKRA). Residues 507–547 (GNEKEKEKQQREKDKEKSKDLAKRASVTERLDLKEEPKEDP) show a composition bias toward basic and acidic residues. The segment covering 592-606 (MKSMPGKSPSAPAPS) has biased composition (low complexity). Positions 615-626 (GKLSSGLPQQKP) are enriched in polar residues. 2 stretches are compositionally biased toward low complexity: residues 633 to 642 (SSSSSSLASS) and 657 to 675 (SSQT…GSNT). A compositionally biased stretch (polar residues) spans 706–719 (TEGNVTAESSSTGV). Residues 743-771 (EARRLRTVKNIADLRQNLEETMSSLRGTQ) are a coiled coil. 9 disordered regions span residues 804-824 (LSWR…PSMG), 939-1151 (LGLG…QSGS), 1177-1200 (KSSA…NQDD), 1213-1283 (YRSL…SDNE), 1295-1338 (PAAQ…PIAT), 1355-1412 (MTQQ…TNAS), 1440-1460 (SLSS…ASSK), 1473-1560 (VKTT…VTSP), and 1591-1629 (SLSN…SFRD). A compositionally biased stretch (low complexity) spans 939 to 985 (LGLGDADSWDDSSSVSSGISDTIDNLSTDDINTSSSISSYANTPASS). Residues 1091 to 1102 (KTDDAKVSEKGR) show a composition bias toward basic and acidic residues. Residues 1130–1142 (PSSSRTPTANANS) show a composition bias toward polar residues. Positions 1220–1245 (SKSNSRNGAGNRSSTSSIDSNISSKS) are enriched in low complexity. Positions 1299–1309 (PVSSPAQTSLQ) are enriched in polar residues. 2 stretches are compositionally biased toward low complexity: residues 1363–1380 (SPSG…PLYS) and 1388–1404 (SPLA…PSNS). Polar residues predominate over residues 1440 to 1456 (SLSSGGVPSHNSSTGLI). The span at 1477-1489 (LSESPLSSPAASP) shows a compositional bias: low complexity. A phosphoserine mark is found at serine 1480, serine 1484, and serine 1488. Basic and acidic residues-rich tracts occupy residues 1498–1510 (RKQD…DRNT) and 1526–1535 (TQEDAKEWLR). A compositionally biased stretch (low complexity) spans 1549–1560 (SPFSSGSSVTSP). A coiled-coil region spans residues 1686 to 1773 (EEKCQSEIRK…AAAQAAINGV (88 aa)). Disordered stretches follow at residues 1790-1887 (ADLR…LRNS) and 1951-1985 (AEND…MGLS). Composition is skewed to polar residues over residues 1800 to 1820 (SDSV…SNIE), 1875 to 1887 (NGST…LRNS), and 1959 to 1985 (ESQG…MGLS). The stretch at 1897–1964 (MDSEAETVMQ…RLKSESQGSG (68 aa)) forms a coiled coil. A Phosphoserine modification is found at serine 1977. 2157–2164 (GPSGTGKT) contributes to the ATP binding site. The disordered stretch occupies residues 2423–2488 (DGYSMPREGS…ILDSSLESTL (66 aa)). Residues 2460–2473 (YSSPQSYDSDSNSN) show a composition bias toward low complexity.

It belongs to the Nav/unc-53 family. As to expression, highly expressed in the brain, kidney and liver. Also expressed in the thyroid, mammary gland, spinal cord, heart, placenta and lung. Abundantly expressed in colon cancers.

It is found in the nucleus. The catalysed reaction is ATP + H2O = ADP + phosphate + H(+). Its function is as follows. Possesses 3' to 5' helicase activity and exonuclease activity. Involved in neuronal development, specifically in the development of different sensory organs. This Homo sapiens (Human) protein is Neuron navigator 2 (NAV2).